A 31-amino-acid polypeptide reads, in one-letter code: Cytochrome b6-f complex subunit 6 (31 aa).

Residues 3 to 23 (TIISYFGFLLASIIFTLILFI) form a helical membrane-spanning segment.

It belongs to the PetL family. As to quaternary structure, the 4 large subunits of the cytochrome b6-f complex are cytochrome b6, subunit IV (17 kDa polypeptide, PetD), cytochrome f and the Rieske protein, while the 4 small subunits are PetG, PetL, PetM and PetN. The complex functions as a dimer.

It localises to the plastid. The protein resides in the chloroplast thylakoid membrane. Its function is as follows. Component of the cytochrome b6-f complex, which mediates electron transfer between photosystem II (PSII) and photosystem I (PSI), cyclic electron flow around PSI, and state transitions. PetL is important for photoautotrophic growth as well as for electron transfer efficiency and stability of the cytochrome b6-f complex. This is Cytochrome b6-f complex subunit 6 from Abies homolepis (Nikko fir).